Here is a 260-residue protein sequence, read N- to C-terminus: MILDDLVAVTKIRLARHQRQQSLADLKQTVAKMPRNHKPDFLTRLKQPGLHVIAEVKKASPSKGTIVTDFPYLAIAKAYDQAGADAISVLTEPDYFNGHLHYLKEISQQVSVPTLRKDFTIDPYMIYEAKANGAVIILLIVAILTDQQLRDYRQLAEKLGMHAIVEAYTAAEVTRALQSGAKIIGINNRNLKDFRVDFNNSLKLRAMVPDNIPVVAESGIKTQEDVEKLAAAGFNAILIGETLMRSNQKRQLIAAFKERA.

This sequence belongs to the TrpC family.

It catalyses the reaction 1-(2-carboxyphenylamino)-1-deoxy-D-ribulose 5-phosphate + H(+) = (1S,2R)-1-C-(indol-3-yl)glycerol 3-phosphate + CO2 + H2O. The protein operates within amino-acid biosynthesis; L-tryptophan biosynthesis; L-tryptophan from chorismate: step 4/5. The chain is Indole-3-glycerol phosphate synthase from Lacticaseibacillus paracasei (strain ATCC 334 / BCRC 17002 / CCUG 31169 / CIP 107868 / KCTC 3260 / NRRL B-441) (Lactobacillus paracasei).